The primary structure comprises 264 residues: Neurexophilin-2 (264 aa).

An N-terminal signal peptide occupies residues 1 to 22 (MRLRPLPLVVVPGLLQLLFCDS). Residues 23 to 90 (KEVVHATEGL…WDWLANITEI (68 aa)) form an II region. Residues Asn-86, Asn-139, Asn-149, and Asn-155 are each glycosylated (N-linked (GlcNAc...) asparagine). Positions 91-169 (QEPLARTKRR…LVPPSKVVEF (79 aa)) are III. The segment at 170–178 (EVSPQSTLE) is IV (linker domain). Residues 179–264 (TKESKSFNCR…HSETPYLSSG (86 aa)) are v (Cys-rich).

This sequence belongs to the neurexophilin family. In terms of processing, may be proteolytically processed at the boundary between the N-terminal non-conserved and the central conserved domain in neuron-like cells. Expressed in brain and kidney.

The protein resides in the secreted. May be signaling molecules that resemble neuropeptides and that act by binding to alpha-neurexins and possibly other receptors. This is Neurexophilin-2 (NXPH2) from Homo sapiens (Human).